The chain runs to 227 residues: DNA utilization protein YhgH (227 aa).

This sequence belongs to the ComF/GntX family.

Its function is as follows. Required for the use of extracellular DNA as a nutrient. Has been suggested to be involved in gluconate metabolism. This chain is DNA utilization protein YhgH, found in Escherichia coli (strain K12).